The chain runs to 875 residues: GATOR2 complex protein MIOS (875 aa).

7 WD repeats span residues 58–100 (SDTP…NSKF), 111–155 (KHAR…TPDI), 182–221 (GQND…QKMF), 223–261 (NTKA…KPVL), 265–306 (EQPK…TPIG), 320–360 (PCDN…SLAW), and 395–437 (RLRA…KQYT). Residues 735–781 (VSCNFCGKSISYSCSSVPHQGRGFSQYGVSGSPTKSKVTSCPGCRKP) form a C4-type zinc finger. Zn(2+)-binding residues include C737 and C740. S759 and S766 each carry phosphoserine. Zn(2+)-binding residues include C775, C778, C788, C827, C830, H832, H835, H838, C849, C854, and C858. An RING-type; atypical zinc finger spans residues 782 to 863 (LPRCALCLIN…CTCKCMQLDT (82 aa)).

Belongs to the WD repeat mio family. Component of the GATOR2 subcomplex, composed of MIOS, SEC13, SEH1L, WDR24 and WDR59. The GATOR2 complex interacts with CASTOR1 and CASTOR2; the interaction is negatively regulated by arginine. CASTOR1 and CASTOR2 convey leucine availability via direct interaction with MIOS. The GATOR2 complex interacts with SESN1, SESN2 and SESN3; the interaction is negatively regulated by amino acids. Interacts with SAR1A and SAR1B; the interaction is direct, disrupted by leucine and mediates the interaction of SAR1A or SAR1B with the GATOR2 complex to negatively regulate the TORC1 signaling upon leucine deprivation. In terms of tissue distribution, widely expressed. In brain, expressed in neurons and glia (oligodendrocytes and astrocytes), with more abundance in neurons.

The protein localises to the lysosome membrane. The GATOR2 complex is negatively regulated by the upstream amino acid sensors CASTOR1 and SESN2, which sequester the GATOR2 complex in absence of amino acids. In the presence of abundant amino acids, GATOR2 is released from CASTOR1 and SESN2 and activated. As a component of the GATOR2 complex, functions as an activator of the amino acid-sensing branch of the mTORC1 signaling pathway. The GATOR2 complex indirectly activates mTORC1 through the inhibition of the GATOR1 subcomplex. GATOR2 probably acts as an E3 ubiquitin-protein ligase toward GATOR1. In the presence of abundant amino acids, the GATOR2 complex mediates ubiquitination of the NPRL2 core component of the GATOR1 complex, leading to GATOR1 inactivation. In the absence of amino acids, GATOR2 is inhibited, activating the GATOR1 complex. Within the GATOR2 complex, MIOS is required to prevent autoubiquitination of WDR24, the catalytic subunit of the complex. The GATOR2 complex is required for brain myelination. This is GATOR2 complex protein MIOS from Mus musculus (Mouse).